The following is a 516-amino-acid chain: Acetylcholine receptor subunit alpha-like (516 aa).

The first 21 residues, 1-21 (MRSVTKYYLHGVVLFATGCAG), serve as a signal peptide directing secretion. Residues 22-243 (NPDAKRLYDD…ITMRRKTLFY (222 aa)) are Extracellular-facing. Asparagine 45 and asparagine 132 each carry an N-linked (GlcNAc...) asparagine glycan. 2 cysteine pairs are disulfide-bonded: cysteine 149–cysteine 163 and cysteine 222–cysteine 223. An N-linked (GlcNAc...) asparagine glycan is attached at asparagine 233. 3 helical membrane-spanning segments follow: residues 244 to 264 (TVNLIIPCMGISFLTVLVFYL), 274 to 294 (LSISILLSLTVFFLLLAEIIP), and 306 to 326 (FVLFTMILDTFSICVTVVVLN). Residues 327–465 (VHFRSPQTHT…WKYVAMVLDR (139 aa)) lie on the Cytoplasmic side of the membrane. The chain crosses the membrane as a helical span at residues 466-486 (PFLWIFTLAVVVGSAGIILQA).

The protein belongs to the ligand-gated ion channel (TC 1.A.9) family. Acetylcholine receptor (TC 1.A.9.1) subfamily.

It is found in the postsynaptic cell membrane. The protein resides in the cell membrane. After binding acetylcholine, the AChR responds by an extensive change in conformation that affects all subunits and leads to opening of an ion-conducting channel across the plasma membrane. This chain is Acetylcholine receptor subunit alpha-like (ARA1), found in Manduca sexta (Tobacco hawkmoth).